A 300-amino-acid chain; its full sequence is 4-hydroxy-tetrahydrodipicolinate synthase (300 aa).

Threonine 56 is a pyruvate binding site. The active-site Proton donor/acceptor is tyrosine 145. The active-site Schiff-base intermediate with substrate is the lysine 173. Valine 215 lines the pyruvate pocket.

The protein belongs to the DapA family. Homotetramer; dimer of dimers.

The protein resides in the cytoplasm. It catalyses the reaction L-aspartate 4-semialdehyde + pyruvate = (2S,4S)-4-hydroxy-2,3,4,5-tetrahydrodipicolinate + H2O + H(+). Its pathway is amino-acid biosynthesis; L-lysine biosynthesis via DAP pathway; (S)-tetrahydrodipicolinate from L-aspartate: step 3/4. Catalyzes the condensation of (S)-aspartate-beta-semialdehyde [(S)-ASA] and pyruvate to 4-hydroxy-tetrahydrodipicolinate (HTPA). The protein is 4-hydroxy-tetrahydrodipicolinate synthase of Prochlorococcus marinus (strain MIT 9301).